Reading from the N-terminus, the 228-residue chain is Leucine rich adaptor protein 1-like (228 aa).

An N-acetylmethionine modification is found at Met-1. Residues 1 to 89 (MEDSPLPDLR…GSPRGSHSSA (89 aa)) are disordered. Basic and acidic residues-rich tracts occupy residues 8-21 (DLRDIELKLGRKVP) and 28-42 (LRGEEPVPRERDRDP). Over residues 44–56 (GGSGGGGGGGGGC) the composition is skewed to gly residues. Residues 57–88 (SSSSSYCSFPPSLSSSSSSSPTSGSPRGSHSS) show a composition bias toward low complexity.

This Homo sapiens (Human) protein is Leucine rich adaptor protein 1-like (LURAP1L).